The following is a 260-amino-acid chain: 3'-5' ssDNA/RNA exonuclease TatD (260 aa).

Positions 92, 128, and 153 each coordinate a divalent metal cation.

Belongs to the metallo-dependent hydrolases superfamily. TatD-type hydrolase family. TatD subfamily. Monomer. The cofactor is Mg(2+).

It localises to the cytoplasm. Functionally, 3'-5' exonuclease that prefers single-stranded DNA and RNA. May play a role in the H(2)O(2)-induced DNA damage repair. The chain is 3'-5' ssDNA/RNA exonuclease TatD from Pantoea sp. (strain At-9b).